The following is a 168-amino-acid chain: Crossover junction endodeoxyribonuclease RuvC (168 aa).

Residues Asp7, Glu66, and Asp138 contribute to the active site. Mg(2+)-binding residues include Asp7, Glu66, and Asp138.

The protein belongs to the RuvC family. Homodimer which binds Holliday junction (HJ) DNA. The HJ becomes 2-fold symmetrical on binding to RuvC with unstacked arms; it has a different conformation from HJ DNA in complex with RuvA. In the full resolvosome a probable DNA-RuvA(4)-RuvB(12)-RuvC(2) complex forms which resolves the HJ. Mg(2+) serves as cofactor.

Its subcellular location is the cytoplasm. It carries out the reaction Endonucleolytic cleavage at a junction such as a reciprocal single-stranded crossover between two homologous DNA duplexes (Holliday junction).. Functionally, the RuvA-RuvB-RuvC complex processes Holliday junction (HJ) DNA during genetic recombination and DNA repair. Endonuclease that resolves HJ intermediates. Cleaves cruciform DNA by making single-stranded nicks across the HJ at symmetrical positions within the homologous arms, yielding a 5'-phosphate and a 3'-hydroxyl group; requires a central core of homology in the junction. The consensus cleavage sequence is 5'-(A/T)TT(C/G)-3'. Cleavage occurs on the 3'-side of the TT dinucleotide at the point of strand exchange. HJ branch migration catalyzed by RuvA-RuvB allows RuvC to scan DNA until it finds its consensus sequence, where it cleaves and resolves the cruciform DNA. The chain is Crossover junction endodeoxyribonuclease RuvC from Cereibacter sphaeroides (strain ATCC 17023 / DSM 158 / JCM 6121 / CCUG 31486 / LMG 2827 / NBRC 12203 / NCIMB 8253 / ATH 2.4.1.) (Rhodobacter sphaeroides).